A 170-amino-acid chain; its full sequence is Protein ripply3 (170 aa).

The WRPW motif signature appears at 40–43; it reads WRPW. Positions 51–61 are enriched in basic and acidic residues; that stretch reads ELDGQQRRSGE. The tract at residues 51–78 is disordered; it reads ELDGQQRRSGEADGVPTNTGPKGALGFQ. Residues 79–114 are ripply homology domain; that stretch reads HPVRLYMPKSKTSEYLQHMGRKVLASFPVQATIHFY. Residues 142-155 are compositionally biased toward polar residues; the sequence is GVDSSRGSSDNYSV. Residues 142-170 are disordered; that stretch reads GVDSSRGSSDNYSVQGGPKRNIGSHAGSA.

This sequence belongs to the ripply family. As to quaternary structure, interacts with tbx1 and tle4/grg4. In terms of tissue distribution, at neurula stage, expressed in the region close to the heart mesoderm. At the tailbud stage, expressed in the pharyngeal region.

It is found in the nucleus. In terms of biological role, acts as a transcriptional corepressor. Negative regulator of the transcriptional activity of tbx1 that plays a key role in pharyngeal development. Plays a role in the formation of the anteroposterior (AP) axis during embryonic development; required to establish the posterolateral border of the pre-placodal ectoderm (PPE) acting downstream of the retinoic acid receptor (RAR) signaling. In Xenopus laevis (African clawed frog), this protein is Protein ripply3 (ripply3).